We begin with the raw amino-acid sequence, 192 residues long: Putative acetyltransferase SH0499 (192 aa).

The protein belongs to the transferase hexapeptide repeat family.

The protein is Putative acetyltransferase SH0499 of Staphylococcus haemolyticus (strain JCSC1435).